The sequence spans 398 residues: ASPTSPKVFPLSLCSTQPDGNVVIACLVQGFFPQEPLSVTWSESGQGVTARNFPPSQDASGDLYTTSSQLTLPATQCLAGKSVTCHVKHYTNPSQDVTVPCPVPSTPPTPSPSTPPTPSPSCCHPRLSLHRPALEDLLLGSEANLTCTLTGLRDASGVTFTWTPSSGKSAVQGPPERDLCGCYSVSSVLPGCAEPWNHGKTFTCTAAYPESKTPLTATLSKSGNTFRPEVHLLPPPSEELALNELVTLTCLARGFSPKDVLVRWLQGSQELPREKYLTWASRQEPSQGTTTFAVTSILRVAAEDWKKGDTFSCMVGHEALPLAFTQKTIDRLADWQMPPPYVVLDLPQETLEEETPGANLWPTTITFLTLFLLSLFYSTALTVTSVRGPSGNREGPQY.

Topologically, residues 1-364 are extracellular; the sequence is ASPTSPKVFP…TPGANLWPTT (364 aa). An Ig-like 1 domain is found at 6–98; sequence PKVFPLSLCS…HYTNPSQDVT (93 aa). Cystine bridges form between cysteine 26/cysteine 85 and cysteine 77/cysteine 101. The disordered stretch occupies residues 96 to 122; sequence DVTVPCPVPSTPPTPSPSTPPTPSPSC. Residues 101–119 are compositionally biased toward pro residues; that stretch reads CPVPSTPPTPSPSTPPTPS. O-linked (GalNAc...) serine glycosylation is present at serine 105. 2 O-linked (GalNAc...) threonine glycosylation sites follow: threonine 106 and threonine 109. Residues serine 111 and serine 113 are each glycosylated (O-linked (GalNAc...) serine). Residues threonine 114 and threonine 117 are each glycosylated (O-linked (GalNAc...) threonine). Serine 119 and serine 121 each carry an O-linked (GalNAc...) serine glycan. Cystine bridges form between cysteine 123-cysteine 180, cysteine 147-cysteine 204, and cysteine 250-cysteine 313. Ig-like domains are found at residues 125–220 and 228–330; these read PRLS…ATLS and PEVH…KTID. Asparagine 144 carries an N-linked (GlcNAc...) (complex) asparagine glycan. Proline 340 carries N-linked (GlcNAc...) (complex) asparagine glycosylation. Glutamate 352 contacts 3-hydroxy-L-kynurenine. A helical transmembrane segment spans residues 365 to 383; it reads ITFLTLFLLSLFYSTALTV. At 384 to 398 the chain is on the cytoplasmic side; sequence TSVRGPSGNREGPQY.

Immunoglobulins are composed of two identical heavy chains and two identical light chains; disulfide-linked. Monomeric or polymeric. Part of the secretory IgA (sIgA) complex that consists of two, four or five IgA monomers, and two additional non-Ig polypeptides, namely the JCHAIN and the secretory component (the proteolytic product of PIGR). Post-translationally, 3-Hydroxykynurenine, an oxidized tryptophan metabolite that is common in biological fluids, reacts with alpha-1-microglobulin to form heterogeneous polycyclic chromophores including hydroxanthommatin. The chromophore reacts with accessible cysteines forming non-reducible thioether cross-links with Ig alpha-1 chain C region Cys-352. In terms of processing, N- and O-glycosylated. N-glycan at Asn-144: Hex5HexNAc4.

Its subcellular location is the secreted. The protein localises to the cell membrane. Constant region of immunoglobulin heavy chains. Immunoglobulins, also known as antibodies, are membrane-bound or secreted glycoproteins produced by B lymphocytes. In the recognition phase of humoral immunity, the membrane-bound immunoglobulins serve as receptors which, upon binding of a specific antigen, trigger the clonal expansion and differentiation of B lymphocytes into immunoglobulins-secreting plasma cells. Secreted immunoglobulins mediate the effector phase of humoral immunity, which results in the elimination of bound antigens. The antigen binding site is formed by the variable domain of one heavy chain, together with that of its associated light chain. Thus, each immunoglobulin has two antigen binding sites with remarkable affinity for a particular antigen. The variable domains are assembled by a process called V-(D)-J rearrangement and can then be subjected to somatic hypermutations which, after exposure to antigen and selection, allow affinity maturation for a particular antigen. Ig alpha is the major immunoglobulin class in body secretions. In Homo sapiens (Human), this protein is Immunoglobulin heavy constant alpha 1.